We begin with the raw amino-acid sequence, 320 residues long: GTP 3',8-cyclase (320 aa).

One can recognise a Radical SAM core domain in the interval 4 to 227 (LYSRRINYMR…METEKSSPAK (224 aa)). Residue Arg13 coordinates GTP. Residues Cys20 and Cys24 each coordinate [4Fe-4S] cluster. Tyr26 is a binding site for S-adenosyl-L-methionine. Cys27 is a [4Fe-4S] cluster binding site. Residue Arg63 participates in GTP binding. Gly67 provides a ligand contact to S-adenosyl-L-methionine. GTP is bound at residue Thr94. Ser118 contacts S-adenosyl-L-methionine. Residue Lys155 coordinates GTP. Residue Met189 coordinates S-adenosyl-L-methionine. Residues Cys249 and Cys252 each contribute to the [4Fe-4S] cluster site. GTP is bound at residue 254-256 (RVR). Cys266 provides a ligand contact to [4Fe-4S] cluster. Residues 300–312 (KHDLLTDSHEESN) are compositionally biased toward basic and acidic residues. The tract at residues 300 to 320 (KHDLLTDSHEESNRGMSQIGG) is disordered.

This sequence belongs to the radical SAM superfamily. MoaA family. In terms of assembly, monomer and homodimer. [4Fe-4S] cluster is required as a cofactor.

The enzyme catalyses GTP + AH2 + S-adenosyl-L-methionine = (8S)-3',8-cyclo-7,8-dihydroguanosine 5'-triphosphate + 5'-deoxyadenosine + L-methionine + A + H(+). The protein operates within cofactor biosynthesis; molybdopterin biosynthesis. Its function is as follows. Catalyzes the cyclization of GTP to (8S)-3',8-cyclo-7,8-dihydroguanosine 5'-triphosphate. The polypeptide is GTP 3',8-cyclase (Alkaliphilus oremlandii (strain OhILAs) (Clostridium oremlandii (strain OhILAs))).